A 439-amino-acid chain; its full sequence is ATP-dependent RNA helicase RhlB (439 aa).

The short motif at 9–37 (QKFADLPLCDEVKQALNENGFEHCTPIQA) is the Q motif element. The region spanning 40–219 (LPVLLEKKDI…YDHMNDPVKV (180 aa)) is the Helicase ATP-binding domain. 53 to 60 (AQTGTGKT) serves as a coordination point for ATP. Residues 165 to 168 (DEAD) carry the DEAD box motif. The Helicase C-terminal domain occupies 243–390 (KLKLLHSLIE…VTSYDRDALI (148 aa)). Residues 394–439 (PPVKIHRKPHAGGRNLRDRNGSPRPSGSHRSGSGRPPRHDRTRRHS) form a disordered region. Residues 415–428 (SPRPSGSHRSGSGR) show a composition bias toward low complexity. Basic residues predominate over residues 429 to 439 (PPRHDRTRRHS).

The protein belongs to the DEAD box helicase family. RhlB subfamily. In terms of assembly, component of the RNA degradosome, which is a multiprotein complex involved in RNA processing and mRNA degradation.

It localises to the cytoplasm. It carries out the reaction ATP + H2O = ADP + phosphate + H(+). Functionally, DEAD-box RNA helicase involved in RNA degradation. Has RNA-dependent ATPase activity and unwinds double-stranded RNA. The chain is ATP-dependent RNA helicase RhlB from Shewanella amazonensis (strain ATCC BAA-1098 / SB2B).